A 139-amino-acid polypeptide reads, in one-letter code: uncharacterized protein (139 aa).

A run of 3 helical transmembrane segments spans residues 19–39, 64–84, and 89–109; these read CIIF…FILG, IFNV…FNLF, and AITI…WILG.

Its subcellular location is the cell membrane. This is an uncharacterized protein from Methanocaldococcus jannaschii (strain ATCC 43067 / DSM 2661 / JAL-1 / JCM 10045 / NBRC 100440) (Methanococcus jannaschii).